The chain runs to 293 residues: uncharacterized protein (293 aa).

Disordered regions lie at residues 1–114 (MFLR…IPKL) and 268–293 (EETADWESEGQEREAKEQREGPGRML). Phosphoserine occurs at positions 34, 35, and 89. Composition is skewed to basic and acidic residues over residues 73 to 95 (SSRDLKVDQLGSKRMDSLKRDKT) and 277 to 293 (GQEREAKEQREGPGRML).

This is an uncharacterized protein from Mus musculus (Mouse).